A 393-amino-acid chain; its full sequence is Cyclin CCL1 (393 aa).

Residues 1–19 (MTDIQLNGKSTLDTPSATM) show a composition bias toward polar residues. Disordered regions lie at residues 1–45 (MTDI…RISD) and 289–325 (SREG…SEEY). 2 stretches are compositionally biased toward basic and acidic residues: residues 21–35 (AKEK…DENN) and 300–321 (NEKE…KSTE).

This sequence belongs to the cyclin family. Cyclin C subfamily. As to quaternary structure, CCL1 and KIN28 form the TFIIK complex, a component of TFIIH holo complex. Component of a complex consisting of KIN28, CCL1 and TFB3.

Functionally, regulatory component of the TFIIK complex (KIN28-CCL1 dimer) which is the protein kinase component of transcription factor IIH (TFIIH) and phosphorylates the C-terminal domain of RNA polymerase II during transition from transcription to elongation after preinitiation complex (PIC) formation, thereby positively regulating transcription. TFIIH (or factor B) is essential for both basal and activated transcription, and is involved in nucleotide excision repair (NER) of damaged DNA. TFIIH has DNA-dependent ATPase activity and is essential for polymerase II transcription in vitro. The sequence is that of Cyclin CCL1 (CCL1) from Saccharomyces cerevisiae (strain ATCC 204508 / S288c) (Baker's yeast).